Here is a 375-residue protein sequence, read N- to C-terminus: MQKLQISVYIYLFMLIVAGPVDLNENSEQKENVEKDGLCNACTWGQNSKYSRIEAIKIQILSKLRLGTAPNISEDAIRQLLPKAPPLRELIDQYDVQRDDSSDGSLEDDDYHATTETIITMPTESDFLMQVEGKPKCCFFKFSSKIQYNKVVKAQLWIYLRPVKTPTTVFVQILRLIKPMKDGTRYTGIRSLKLDMNPGTGIWQSIDVKTVLQNWLKQPESNLGIEIKALDENGHDLAVTFPGPGEDGLNPFLEVKVTDTPKRSRRDFGLDCDEHSTESRCCRYPLTVDFEAFGWDWIIAPKRYKANYCSGECEFVFLQKYPHTHLVHQANPRGSAGPCCTPTKMSPINMLYFNGEGQIIYGKIPAMVVDRCGCS.

The N-terminal stretch at 1-18 (MQKLQISVYIYLFMLIVA) is a signal peptide. Positions 19-266 (GPVDLNENSE…VTDTPKRSRR (248 aa)) are excised as a propeptide. Residue Asn71 is glycosylated (N-linked (GlcNAc...) asparagine). 4 disulfide bridges follow: Cys272-Cys282, Cys281-Cys340, Cys309-Cys372, and Cys313-Cys374.

Belongs to the TGF-beta family. As to quaternary structure, homodimer; disulfide-linked. Interacts with WFIKKN2, leading to inhibit its activity. Interacts with FSTL3. In terms of processing, synthesized as large precursor molecule that undergoes proteolytic cleavage to generate an N-terminal propeptide and a disulfide linked C-terminal dimer, which is the biologically active molecule. The circulating form consists of a latent complex of the C-terminal dimer and other proteins, including its propeptide, which maintain the C-terminal dimer in a latent, inactive state. Ligand activation requires additional cleavage of the prodomain by a tolloid-like metalloproteinase.

The protein resides in the secreted. Functionally, acts specifically as a negative regulator of skeletal muscle growth. This chain is Growth/differentiation factor 8 (MSTN), found in Lepus capensis (Brown hare).